The following is a 565-amino-acid chain: Thiol:disulfide interchange protein DsbD (565 aa).

An N-terminal signal peptide occupies residues 1-19 (MAQRIFTLILLLCSTSVFA). Disulfide bonds link cysteine 122–cysteine 128 and cysteine 182–cysteine 304. Transmembrane regions (helical) follow at residues 163-183 (LPFS…TPCV), 208-228 (LLTF…GLVV), 243-263 (YVLI…FGLF), 296-316 (IAGL…LLYI), 323-343 (WLGG…LMLI), 357-377 (WMEQ…VFLL), and 384-404 (VWGL…AFIT). Residues 434-565 (WAFGATHTAQ…FSAHLRDRQP (132 aa)) enclose the Thioredoxin domain. A disulfide bridge connects residues cysteine 480 and cysteine 483.

Belongs to the thioredoxin family. DsbD subfamily.

It is found in the cell inner membrane. The enzyme catalyses [protein]-dithiol + NAD(+) = [protein]-disulfide + NADH + H(+). It catalyses the reaction [protein]-dithiol + NADP(+) = [protein]-disulfide + NADPH + H(+). Its function is as follows. Required to facilitate the formation of correct disulfide bonds in some periplasmic proteins and for the assembly of the periplasmic c-type cytochromes. Acts by transferring electrons from cytoplasmic thioredoxin to the periplasm. This transfer involves a cascade of disulfide bond formation and reduction steps. In Shigella boydii serotype 4 (strain Sb227), this protein is Thiol:disulfide interchange protein DsbD.